Here is a 173-residue protein sequence, read N- to C-terminus: 2-C-methyl-D-erythritol 2,4-cyclodiphosphate synthase (173 aa).

A divalent metal cation is bound by residues Asp-17 and His-19. Residues Asp-17 to His-19 and His-49 to Ser-50 each bind 4-CDP-2-C-methyl-D-erythritol 2-phosphate. Position 57 (His-57) interacts with a divalent metal cation. 4-CDP-2-C-methyl-D-erythritol 2-phosphate is bound by residues Phe-76–Asp-80, Thr-147–Glu-150, Phe-154, and Arg-157.

This sequence belongs to the IspF family. In terms of assembly, homotrimer. A divalent metal cation serves as cofactor.

It catalyses the reaction 4-CDP-2-C-methyl-D-erythritol 2-phosphate = 2-C-methyl-D-erythritol 2,4-cyclic diphosphate + CMP. Its pathway is isoprenoid biosynthesis; isopentenyl diphosphate biosynthesis via DXP pathway; isopentenyl diphosphate from 1-deoxy-D-xylulose 5-phosphate: step 4/6. Functionally, involved in the biosynthesis of isopentenyl diphosphate (IPP) and dimethylallyl diphosphate (DMAPP), two major building blocks of isoprenoid compounds. Catalyzes the conversion of 4-diphosphocytidyl-2-C-methyl-D-erythritol 2-phosphate (CDP-ME2P) to 2-C-methyl-D-erythritol 2,4-cyclodiphosphate (ME-CPP) with a corresponding release of cytidine 5-monophosphate (CMP). The chain is 2-C-methyl-D-erythritol 2,4-cyclodiphosphate synthase from Ehrlichia canis (strain Jake).